Here is a 292-residue protein sequence, read N- to C-terminus: D-alanyl-D-alanine endopeptidase (292 aa).

Residues 1 to 18 (MFKKALFILSLCPSFALA) form the signal peptide. The active-site Acyl-ester intermediate is Ser-45. Lys-48 (proton acceptor) is an active-site residue. Ser-102 is an active-site residue. Lys-207 contacts substrate.

This sequence belongs to the peptidase S11 family.

It localises to the periplasm. Cell wall formation. May play a specialized role in remodeling the cell wall. Specifically hydrolyzes the DD-diaminopimelate-alanine bonds in high-molecular-mass murein sacculi. The chain is D-alanyl-D-alanine endopeptidase (pbpG) from Haemophilus influenzae (strain ATCC 51907 / DSM 11121 / KW20 / Rd).